The primary structure comprises 832 residues: Dolichyl-phosphate-mannose--protein mannosyltransferase 6 (832 aa).

The interval 1–44 (MATGYSTGVSPFDLDENNHNDSIHHRHQNHHSQSHDSSGERDDT) is disordered. N-linked (GlcNAc...) asparagine glycosylation is found at N20 and N59. The next 7 helical transmembrane spans lie at 135–155 (FYFD…GYLA), 175–194 (YVFM…PLAY), 206–227 (TCWL…SKFI), 232–252 (MLLF…TLAI), 266–286 (LEIK…SVKW), 293–311 (ALVG…YQTF), and 327–347 (LIHW…IYVA). N-linked (GlcNAc...) asparagine glycosylation is present at N357. One can recognise an MIR 1 domain in the interval 383–437 (PRSVAFGSLVTIRSQGLSPNLIHSHPHNYPQGSQEQQVTTYGFKDDNNEFLFEFG). N-linked (GlcNAc...) asparagine glycosylation is present at N453. 2 MIR domains span residues 466-522 (HVII…IEIQ) and 537-595 (PSEI…IEKH). The next 4 helical transmembrane spans lie at 676 to 696 (ITWI…VVGI), 723 to 743 (LLAA…VPFI), 755 to 775 (VPAL…ILNL), and 787 to 807 (IFKV…FWYF).

The protein belongs to the glycosyltransferase 39 family.

It localises to the endoplasmic reticulum membrane. The enzyme catalyses a di-trans,poly-cis-dolichyl beta-D-mannosyl phosphate + L-seryl-[protein] = 3-O-(alpha-D-mannosyl)-L-seryl-[protein] + a di-trans,poly-cis-dolichyl phosphate + H(+). It catalyses the reaction a di-trans,poly-cis-dolichyl beta-D-mannosyl phosphate + L-threonyl-[protein] = 3-O-(alpha-D-mannosyl)-L-threonyl-[protein] + a di-trans,poly-cis-dolichyl phosphate + H(+). It functions in the pathway protein modification; protein glycosylation. In terms of biological role, protein mannosyltransferase (PMT) involved in hyphal morphogenesis and drug sensitivity. Transfers mannose from Dol-P-mannose to Ser or Thr residues on proteins. PMT1, PMT2 and PMT4 account for most of the protein-O-glycosylation activity, while PMT5 and PMT6 may specifically modulate a much narrower spectrum of target proteins. Required for biofilm formation and virulence. This Candida albicans (strain SC5314 / ATCC MYA-2876) (Yeast) protein is Dolichyl-phosphate-mannose--protein mannosyltransferase 6 (PMT6).